The sequence spans 902 residues: Probable dipeptidyl-aminopeptidase B (902 aa).

Disordered regions lie at residues 1–23 (MTRRRSTSGTSSRSSTDSGLSVD) and 53–72 (DAEADVDEPFLPTSSKKLGS). The Cytoplasmic portion of the chain corresponds to 1–78 (MTRRRSTSGT…KLGSGSRTRQ (78 aa)). Over residues 7–21 (TSGTSSRSSTDSGLS) the composition is skewed to low complexity. Residues 79–99 (IFWALVILCLGGWVLALVLFL) form a helical; Signal-anchor for type II membrane protein membrane-spanning segment. Residues 100–902 (THGRASSQTA…VKRSVPAFAH (803 aa)) lie on the Vacuolar side of the membrane. N-linked (GlcNAc...) asparagine glycans are attached at residues asparagine 335 and asparagine 626. Serine 740 (charge relay system) is an active-site residue. Asparagine 794 and asparagine 799 each carry an N-linked (GlcNAc...) asparagine glycan. Active-site charge relay system residues include aspartate 817 and histidine 850.

Belongs to the peptidase S9B family.

Its subcellular location is the vacuole membrane. It carries out the reaction Release of an N-terminal dipeptide, Xaa-Yaa-|-Zaa-, from a polypeptide, preferentially when Yaa is Pro, provided Zaa is neither Pro nor hydroxyproline.. Functionally, type IV dipeptidyl-peptidase which removes N-terminal dipeptides sequentially from polypeptides having unsubstituted N-termini provided that the penultimate residue is proline. The polypeptide is Probable dipeptidyl-aminopeptidase B (dapB) (Aspergillus oryzae (strain ATCC 42149 / RIB 40) (Yellow koji mold)).